Reading from the N-terminus, the 357-residue chain is Chorismate synthase (357 aa).

R47 lines the NADP(+) pocket. FMN-binding positions include R123 to S125, G281, K296 to S300, and R324.

It belongs to the chorismate synthase family. In terms of assembly, homotetramer. FMNH2 serves as cofactor.

The catalysed reaction is 5-O-(1-carboxyvinyl)-3-phosphoshikimate = chorismate + phosphate. It participates in metabolic intermediate biosynthesis; chorismate biosynthesis; chorismate from D-erythrose 4-phosphate and phosphoenolpyruvate: step 7/7. Its function is as follows. Catalyzes the anti-1,4-elimination of the C-3 phosphate and the C-6 proR hydrogen from 5-enolpyruvylshikimate-3-phosphate (EPSP) to yield chorismate, which is the branch point compound that serves as the starting substrate for the three terminal pathways of aromatic amino acid biosynthesis. This reaction introduces a second double bond into the aromatic ring system. This is Chorismate synthase from Chlamydia trachomatis serovar A (strain ATCC VR-571B / DSM 19440 / HAR-13).